The chain runs to 512 residues: Maturase K (512 aa).

It belongs to the intron maturase 2 family. MatK subfamily.

The protein localises to the plastid. It is found in the chloroplast. Functionally, usually encoded in the trnK tRNA gene intron. Probably assists in splicing its own and other chloroplast group II introns. The sequence is that of Maturase K from Oenothera argillicola (Appalachian evening primrose).